Reading from the N-terminus, the 332-residue chain is D-galactose/methyl-galactoside binding periplasmic protein MglB (332 aa).

The N-terminal stretch at 1-23 (MNKKVLTLSAVMASMLFGAAAHA) is a signal peptide. Positions 37 and 114 each coordinate beta-D-galactose. Asp37 and Asn114 together coordinate beta-D-glucose. Ca(2+) is bound by residues Asp157, Asn159, Asp161, Gln163, and Gln165. His175, Asp177, and Arg181 together coordinate beta-D-galactose. Beta-D-glucose is bound by residues His175, Asp177, and Arg181. A Ca(2+)-binding site is contributed by Glu228. Beta-D-galactose contacts are provided by Asn234, Asp259, and Asn279. Beta-D-glucose-binding residues include Asn234, Asp259, and Asn279.

This sequence belongs to the bacterial solute-binding protein 2 family. The ABC transporter complex is composed of one ATP-binding protein (MglA), two transmembrane proteins (MglC) and a solute-binding protein (MglB).

Its subcellular location is the periplasm. Its function is as follows. Part of the ABC transporter complex MglABC involved in galactose/methyl galactoside import. In addition, binds D-galactose and D-glucose and plays a role in the chemotaxis towards these two sugars by interacting with the Trg chemoreceptor. The polypeptide is D-galactose/methyl-galactoside binding periplasmic protein MglB (mglB) (Escherichia coli O6:H1 (strain CFT073 / ATCC 700928 / UPEC)).